A 267-amino-acid chain; its full sequence is Hydroxynaphthalene reductase-like protein Arp2 (267 aa).

NADP(+) is bound by residues I25, N45, D71, and N98. Residues S147 and S148 each act as proton donor in the active site. NADP(+) contacts are provided by Y162, K166, V195, and T197. Y162 serves as the catalytic Proton acceptor. Catalysis depends on K166, which acts as the Lowers pKa of active site Tyr.

Belongs to the short-chain dehydrogenases/reductases (SDR) family.

Hydroxynaphthalene reductase-like protein; part of the Pks2 gene cluster that mediates the formation of infectious structures (appressoria), enabling these fungi to kill insects faster. The product of the Pks2 gene cluster is different from the one of Pks1 and has still not been identified. The chain is Hydroxynaphthalene reductase-like protein Arp2 from Metarhizium guizhouense (strain ARSEF 977).